A 2450-amino-acid chain; its full sequence is Tetratricopeptide repeat protein 28 (2450 aa).

Methionine 1 bears the N-acetylmethionine mark. Residues 1–36 (MEQPPPLAPEPASARSRRRREPESPPAPIPLFGART) are disordered. At serine 24 the chain carries Phosphoserine. TPR repeat units follow at residues 52-85 (FVEK…DPQN), 87-119 (ILYS…NPKW), 120-153 (PKAY…DPKS), 190-223 (FVVV…GTCS), 228-261 (GSVF…AKTL), 268-301 (CRAH…AMKL), 308-341 (SSAL…AKQS), 348-381 (AREL…AKDL), 388-421 (ARAY…AQEL), 428-461 (MRAY…AEDL), 468-501 (GRAS…AQEL), 508-541 (GRAY…SMEV), 548-581 (ASTH…AREL), 588-621 (ARAL…APDL), 628-661 (GKVC…AKDL), 668-701 (AKAY…AQSL), 708-741 (FRAL…SHHV), 748-781 (ASAY…YQEL), 788-821 (CRAH…GRKL), 828-861 (AQVY…LQQL), 871-904 (GRAY…AQSL), 911-944 (AKAY…AHEL), 951-984 (AQAY…ARDM), 991-1024 (SDAA…AEET), 1031-1064 (GRAY…AAQM), 1071-1104 (TVSY…AEQL), 1111-1144 (AKIR…FETI), and 1163-1196 (TSSY…AFAD). Residues 1362–1381 (SGTVSPSKDGTSSLPRRQNS) form a disordered region. Phosphoserine occurs at positions 1584 and 2098. Positions 2001–2364 (KPEGGLEGGG…GTLTSKRDVL (364 aa)) are disordered. The span at 2090–2116 (SVSSKGSVSTPNSPVKMTLIPSPNSPF) shows a compositional bias: polar residues. Residues 2124 to 2140 (SSDTGESDQSSTETDST) are compositionally biased toward low complexity. The span at 2143-2153 (SQEESTPKLDP) shows a compositional bias: basic and acidic residues. A compositionally biased stretch (polar residues) spans 2191–2206 (APSSTTVFRASETSAF). Residue serine 2216 is modified to Phosphoserine. Polar residues predominate over residues 2229–2245 (ARSSSLPKVSSPATSEV). 2 stretches are compositionally biased toward low complexity: residues 2252-2262 (SPPGSSHPSPG) and 2296-2320 (SPAC…SPAD). Phosphoserine occurs at positions 2365 and 2370.

In terms of assembly, interacts with AURKB. In terms of tissue distribution, expressed in embryos at all stages examined. In adult tissues, detected in heart and at low levels in kidney and testis.

It is found in the cytoplasm. It localises to the cytoskeleton. The protein localises to the microtubule organizing center. The protein resides in the centrosome. Its subcellular location is the spindle. It is found in the spindle pole. It localises to the midbody. During mitosis, may be involved in the condensation of spindle midzone microtubules, leading to the formation of midbody. Its function is as follows. Essential for the formation and integrity of the midbody. Max play a critical role in the progress of mitosis and cytokinesis during cell cycle. The protein is Tetratricopeptide repeat protein 28 (Ttc28) of Mus musculus (Mouse).